Here is a 412-residue protein sequence, read N- to C-terminus: cAMP-dependent protein kinase regulatory subunit (412 aa).

Positions 1-142 (MSFEEVYEEL…RLKRSVAGNF (142 aa)) are dimerization and phosphorylation. A Pseudophosphorylation motif motif is present at residues 101–105 (RRQSV). Phosphoserine is present on Ser104. 3',5'-cyclic AMP-binding positions include 143–277 (LFKN…EEVP), Glu224, Arg233, 278–412 (ILSS…STKA), Glu344, and Arg353. The interval 392-412 (MGMDNEYGDQSLHRSPPSTKA) is disordered.

This sequence belongs to the cAMP-dependent kinase regulatory chain family. In terms of assembly, tetramer, composed of 2 regulatory (R) and 2 catalytic (C) subunits. In the presence of cAMP it dissociates into 2 active monomeric C subunits and an R dimer.

The sequence is that of cAMP-dependent protein kinase regulatory subunit (cgs1) from Schizosaccharomyces pombe (strain 972 / ATCC 24843) (Fission yeast).